Reading from the N-terminus, the 727-residue chain is AN1-type zinc finger protein 4 (727 aa).

Residues 28–103 form the Ubiquitin-like domain; that stretch reads MELFIETLTG…LKLVLAMRGG (76 aa). Disordered stretches follow at residues 187 to 217 and 238 to 264; these read HRMS…IIEN and KKPK…TAPS. Residues 238 to 248 show a composition bias toward basic residues; the sequence is KKPKKAVKIKP. The AN1-type zinc-finger motif lies at 661-708; the sequence is KKTTNHCFLCGKKTGLASSYECRCGNNFCASHRYAETHGCTYDYKSAG. Residues Cys667, Cys670, Cys682, Cys684, Cys689, His692, His698, and Cys700 each contribute to the Zn(2+) site.

The polypeptide is AN1-type zinc finger protein 4 (ZFAND4) (Homo sapiens (Human)).